Consider the following 590-residue polypeptide: UvrABC system protein C (590 aa).

In terms of domain architecture, GIY-YIG spans 14 to 91 (DQPGCYLMKD…IKKYDPKYNV (78 aa)). The 36-residue stretch at 196–231 (NEVKKELEAKMLEASENLQFERAKEFRDQIAHIEST) folds into the UVR domain.

This sequence belongs to the UvrC family. In terms of assembly, interacts with UvrB in an incision complex.

Its subcellular location is the cytoplasm. Functionally, the UvrABC repair system catalyzes the recognition and processing of DNA lesions. UvrC both incises the 5' and 3' sides of the lesion. The N-terminal half is responsible for the 3' incision and the C-terminal half is responsible for the 5' incision. The sequence is that of UvrABC system protein C from Bacillus licheniformis (strain ATCC 14580 / DSM 13 / JCM 2505 / CCUG 7422 / NBRC 12200 / NCIMB 9375 / NCTC 10341 / NRRL NRS-1264 / Gibson 46).